A 156-amino-acid chain; its full sequence is ATP synthase subunit b (156 aa).

Residues 7 to 27 (LIGELIAFTVFVLFCMKFVWP) form a helical membrane-spanning segment.

It belongs to the ATPase B chain family. F-type ATPases have 2 components, F(1) - the catalytic core - and F(0) - the membrane proton channel. F(1) has five subunits: alpha(3), beta(3), gamma(1), delta(1), epsilon(1). F(0) has three main subunits: a(1), b(2) and c(10-14). The alpha and beta chains form an alternating ring which encloses part of the gamma chain. F(1) is attached to F(0) by a central stalk formed by the gamma and epsilon chains, while a peripheral stalk is formed by the delta and b chains.

The protein localises to the cell inner membrane. Its function is as follows. F(1)F(0) ATP synthase produces ATP from ADP in the presence of a proton or sodium gradient. F-type ATPases consist of two structural domains, F(1) containing the extramembraneous catalytic core and F(0) containing the membrane proton channel, linked together by a central stalk and a peripheral stalk. During catalysis, ATP synthesis in the catalytic domain of F(1) is coupled via a rotary mechanism of the central stalk subunits to proton translocation. Functionally, component of the F(0) channel, it forms part of the peripheral stalk, linking F(1) to F(0). This is ATP synthase subunit b from Pseudoalteromonas translucida (strain TAC 125).